The chain runs to 242 residues: MGQKIHPTGFRLGITQEHRSRWYADPKNYPDTLQEDHKIRQYVKATLANAGISQIRVERKAEQIDLEVRTARPGVVVGRGGAGIDSLRVGLQKLLGSNRQIRINVVEVTKVDTDAMLIGEYIAQQLEKRVSFRRVVRQAITRAQKAGVEGIKIQVSGRVNGAEIARTEVTREGSVPLHTLRANIDYAYCTAKTIYGILGIKIWVFKGEIIPGQEEIANAKVNQPKRRQQKRRQQYDDRSNEG.

The 71-residue stretch at 39-109 (IRQYVKATLA…QIRINVVEVT (71 aa)) folds into the KH type-2 domain. Residues 220-242 (KVNQPKRRQQKRRQQYDDRSNEG) are disordered. Over residues 223-232 (QPKRRQQKRR) the composition is skewed to basic residues. Over residues 233–242 (QQYDDRSNEG) the composition is skewed to basic and acidic residues.

Belongs to the universal ribosomal protein uS3 family. As to quaternary structure, part of the 30S ribosomal subunit. Forms a tight complex with proteins S10 and S14.

Binds the lower part of the 30S subunit head. Binds mRNA in the 70S ribosome, positioning it for translation. The protein is Small ribosomal subunit protein uS3 of Trichodesmium erythraeum (strain IMS101).